The sequence spans 270 residues: Putative tRNA (cytidine(32)/guanosine(34)-2'-O)-methyltransferase (270 aa).

Residues Gly-53, Trp-55, Asp-78, Asp-94, and Asp-119 each coordinate S-adenosyl-L-methionine. Lys-159 (proton acceptor) is an active-site residue.

The protein belongs to the class I-like SAM-binding methyltransferase superfamily. RNA methyltransferase RlmE family. TRM7 subfamily.

The protein resides in the cytoplasm. The enzyme catalyses cytidine(32)/guanosine(34) in tRNA + 2 S-adenosyl-L-methionine = 2'-O-methylcytidine(32)/2'-O-methylguanosine(34) in tRNA + 2 S-adenosyl-L-homocysteine + 2 H(+). Methylates the 2'-O-ribose of nucleotides at positions 32 and 34 of the tRNA anticodon loop of substrate tRNAs. This Dictyostelium discoideum (Social amoeba) protein is Putative tRNA (cytidine(32)/guanosine(34)-2'-O)-methyltransferase (fsjA).